The chain runs to 495 residues: UDP-glycosyltransferase 73C5 (495 aa).

Residues 146–162 form a helical membrane-spanning segment; the sequence is ILFHGMGCFCLLCMHVL. UDP-alpha-D-glucose contacts are provided by residues serine 296, 356–358, 373–381, and 395–398; these read SPQ, HCGWNSTLE, and FADQ. Positions 446–477 are disordered; it reads MGESDDAKERRRRAKELGDSAHKAVEEGGSSH. A compositionally biased stretch (basic and acidic residues) spans 450–471; it reads DDAKERRRRAKELGDSAHKAVE.

Belongs to the UDP-glycosyltransferase family. As to expression, elongating hypocotyls and root-specific. Expressed in the vascular system, in meristematic tissues of the root tip, and in the vasculature of the hypocotyl right after germination. In late stage of flower development, expressed in petals, and in abscission zones.

Its subcellular location is the membrane. Functionally, specifically catalyzes 23-O-glucosylation of brassinosteroids, resulting probably in their inactivation. Also, involved in the O-glucosylation of trans-zeatin and dihydrozeatin. Active in vitro on cis-zeatin, dihydrozeatin-9-N-Glc, and olomoucine. Also involved in the detoxification of the Fusarium mycotoxin deoxynivalenol by the transfer of glucose from UDP-glucose to the hydroxyl group at C-3. Possesses low quercetin 7-O-glucosyltransferase and 4'-O-glucosyltransferase activities in vitro. The polypeptide is UDP-glycosyltransferase 73C5 (UGT73C5) (Arabidopsis thaliana (Mouse-ear cress)).